The sequence spans 240 residues: Dephospho-CoA kinase domain-containing protein (240 aa).

Positions leucine 3 to leucine 207 constitute a DPCK domain. Glycine 8–serine 15 contacts ATP.

Belongs to the CoaE family.

The sequence is that of Dephospho-CoA kinase domain-containing protein (Dcakd) from Rattus norvegicus (Rat).